A 444-amino-acid polypeptide reads, in one-letter code: Trigger factor (444 aa).

The PPIase FKBP-type domain occupies 166–251 (GDQVVIDFKG…VKAVKAPKAA (86 aa)).

It belongs to the FKBP-type PPIase family. Tig subfamily.

The protein resides in the cytoplasm. It carries out the reaction [protein]-peptidylproline (omega=180) = [protein]-peptidylproline (omega=0). Functionally, involved in protein export. Acts as a chaperone by maintaining the newly synthesized protein in an open conformation. Functions as a peptidyl-prolyl cis-trans isomerase. The polypeptide is Trigger factor (Cereibacter sphaeroides (strain KD131 / KCTC 12085) (Rhodobacter sphaeroides)).